An 89-amino-acid chain; its full sequence is Small ribosomal subunit protein uS15 (89 aa).

It belongs to the universal ribosomal protein uS15 family. As to quaternary structure, part of the 30S ribosomal subunit. Forms a bridge to the 50S subunit in the 70S ribosome, contacting the 23S rRNA.

One of the primary rRNA binding proteins, it binds directly to 16S rRNA where it helps nucleate assembly of the platform of the 30S subunit by binding and bridging several RNA helices of the 16S rRNA. Functionally, forms an intersubunit bridge (bridge B4) with the 23S rRNA of the 50S subunit in the ribosome. The chain is Small ribosomal subunit protein uS15 from Buchnera aphidicola subsp. Schizaphis graminum (strain Sg).